A 1891-amino-acid chain; its full sequence is Endoribonuclease Dicer-L (1891 aa).

The region spanning 41 to 217 (LLEAALDHNT…DLEEKIQKLE (177 aa)) is the Helicase ATP-binding domain. Position 54–61 (54–61 (LNSGSGKT)) interacts with ATP. A DECH box motif is present at residues 165 to 168 (DECH). The Helicase C-terminal domain occupies 425–594 (SFPSPFTNIL…SIDCGNTESE (170 aa)). The Dicer dsRNA-binding fold domain maps to 622–714 (AIGHINRYCA…MPVGKETVKY (93 aa)). The region spanning 887–1034 (KFVEDIEKSE…LVPELCAIHP (148 aa)) is the PAZ domain. RNase III domains are found at residues 1248 to 1379 (TSDM…ETSG) and 1635 to 1793 (FENF…MDSG). Positions 1292, 1370, 1373, 1674, 1779, and 1782 each coordinate Mg(2+). The region spanning 1818 to 1883 (VPRSPVRELL…ARRALRSLKA (66 aa)) is the DRBM domain.

This sequence belongs to the helicase family. Dicer subfamily. Component of the RISC loading complex (RLC), or micro-RNA (miRNA) loading complex (miRLC), which is composed of dicer1, ago2 and tarbp2; dicer1 and tarbp2 are required to process precursor miRNAs (pre-miRNAs) to mature miRNAs and then load them onto ago2. Note that the trimeric RLC/miRLC is also referred to as RISC. The cofactor is Mg(2+). Requires Mn(2+) as cofactor.

The protein localises to the cytoplasm. It carries out the reaction Endonucleolytic cleavage to 5'-phosphomonoester.. Functionally, double-stranded RNA (dsRNA) endoribonuclease playing a central role in short dsRNA-mediated post-transcriptional gene silencing. Cleaves naturally occurring long dsRNAs and short hairpin pre-microRNAs (miRNA) into fragments of 21 to 23 nucleotides with 3' overhang of two nucleotides, producing respectively short interfering RNAs (siRNA) and mature microRNAs. SiRNAs and miRNAs serve as guide to direct the RNA-induced silencing complex (RISC) to complementary RNAs to degrade them or prevent their translation. Gene silencing mediated by siRNAs, also called RNA interference, controls the elimination of transcripts from mobile and repetitive DNA elements of the genome but also the degradation of exogenous RNA of viral origin for instance. The miRNA pathway on the other side is a mean to specifically regulate the expression of target genes. During embryonic development, at the left-right organizer, post-transcriptionally regulates the expression of dand5 in flow sensor cells. In post-flow stages, acts along with Bicc1 to repress dand5 mRNA translation and decay. Decreased Dand5 expression lifts repression of Nodal and defines leftness by induction of the lateral plate mesoderm Nodal signaling cascade. In Xenopus laevis (African clawed frog), this protein is Endoribonuclease Dicer-L (dicer1.L).